A 438-amino-acid chain; its full sequence is 3-phosphoshikimate 1-carboxyvinyltransferase (438 aa).

Phosphoenolpyruvate is bound at residue lysine 21. Serine 22 and arginine 26 together coordinate 3-phosphoshikimate. Residues asparagine 93 to threonine 96 form a phosphoenolpyruvate region. 3 residues coordinate phosphoenolpyruvate: glycine 95, threonine 96, and arginine 123. Positions 167, 168, 169, 315, and 342 each coordinate 3-phosphoshikimate. Glutamine 169 contacts phosphoenolpyruvate. Catalysis depends on aspartate 315, which acts as the Proton acceptor. Phosphoenolpyruvate contacts are provided by arginine 346 and arginine 387.

It belongs to the EPSP synthase family. As to quaternary structure, homodimer or homotetramer.

The protein resides in the cytoplasm. It catalyses the reaction 3-phosphoshikimate + phosphoenolpyruvate = 5-O-(1-carboxyvinyl)-3-phosphoshikimate + phosphate. It functions in the pathway metabolic intermediate biosynthesis; chorismate biosynthesis; chorismate from D-erythrose 4-phosphate and phosphoenolpyruvate: step 6/7. Catalyzes the transfer of the enolpyruvyl moiety of phosphoenolpyruvate (PEP) to the 5-hydroxyl of shikimate-3-phosphate (S3P) to produce enolpyruvyl shikimate-3-phosphate and inorganic phosphate. This chain is 3-phosphoshikimate 1-carboxyvinyltransferase, found in Coxiella burnetii (strain RSA 493 / Nine Mile phase I).